Reading from the N-terminus, the 583-residue chain is Proline--tRNA ligase (583 aa).

This sequence belongs to the class-II aminoacyl-tRNA synthetase family. ProS type 1 subfamily. In terms of assembly, homodimer.

It is found in the cytoplasm. The enzyme catalyses tRNA(Pro) + L-proline + ATP = L-prolyl-tRNA(Pro) + AMP + diphosphate. In terms of biological role, catalyzes the attachment of proline to tRNA(Pro) in a two-step reaction: proline is first activated by ATP to form Pro-AMP and then transferred to the acceptor end of tRNA(Pro). As ProRS can inadvertently accommodate and process non-cognate amino acids such as alanine and cysteine, to avoid such errors it has two additional distinct editing activities against alanine. One activity is designated as 'pretransfer' editing and involves the tRNA(Pro)-independent hydrolysis of activated Ala-AMP. The other activity is designated 'posttransfer' editing and involves deacylation of mischarged Ala-tRNA(Pro). The misacylated Cys-tRNA(Pro) is not edited by ProRS. The chain is Proline--tRNA ligase from Aromatoleum aromaticum (strain DSM 19018 / LMG 30748 / EbN1) (Azoarcus sp. (strain EbN1)).